A 483-amino-acid chain; its full sequence is Ero1-like protein (483 aa).

An N-terminal signal peptide occupies residues 1 to 29; it reads MTTRTVQRNLWASAAVVLVLLLLWTDTTG. Intrachain disulfides connect Cys44-Cys57, Cys46-Cys55, Cys94-Cys402, Cys103-Cys108, Cys227-Cys251, and Cys405-Cys408. The FAD site is built by Arg206, Thr208, and Trp219. Residue Asn232 is glycosylated (N-linked (GlcNAc...) asparagine). The FAD site is built by Ser262, His265, and Arg301. N-linked (GlcNAc...) asparagine glycosylation occurs at Asn395.

This sequence belongs to the EROs family. In terms of assembly, may function both as a monomer and a homodimer. It depends on FAD as a cofactor.

The protein localises to the endoplasmic reticulum membrane. Oxidoreductase involved in disulfide bond formation in the endoplasmic reticulum. Efficiently reoxidizes pdi-1, the enzyme catalyzing protein disulfide formation, in order to allow pdi-1 to sustain additional rounds of disulfide formation. Following pdi reoxidation, passes its electrons to molecular oxygen via FAD, leading to the production of reactive oxygen species (ROS) in the cell. The chain is Ero1-like protein (Ero1L) from Drosophila melanogaster (Fruit fly).